The chain runs to 173 residues: Crossover junction endodeoxyribonuclease RuvC (173 aa).

Residues Asp-8, Glu-67, and Asp-139 contribute to the active site. 3 residues coordinate Mg(2+): Asp-8, Glu-67, and Asp-139.

This sequence belongs to the RuvC family. In terms of assembly, homodimer which binds Holliday junction (HJ) DNA. The HJ becomes 2-fold symmetrical on binding to RuvC with unstacked arms; it has a different conformation from HJ DNA in complex with RuvA. In the full resolvosome a probable DNA-RuvA(4)-RuvB(12)-RuvC(2) complex forms which resolves the HJ. Mg(2+) serves as cofactor.

Its subcellular location is the cytoplasm. It catalyses the reaction Endonucleolytic cleavage at a junction such as a reciprocal single-stranded crossover between two homologous DNA duplexes (Holliday junction).. Functionally, the RuvA-RuvB-RuvC complex processes Holliday junction (HJ) DNA during genetic recombination and DNA repair. Endonuclease that resolves HJ intermediates. Cleaves cruciform DNA by making single-stranded nicks across the HJ at symmetrical positions within the homologous arms, yielding a 5'-phosphate and a 3'-hydroxyl group; requires a central core of homology in the junction. The consensus cleavage sequence is 5'-(A/T)TT(C/G)-3'. Cleavage occurs on the 3'-side of the TT dinucleotide at the point of strand exchange. HJ branch migration catalyzed by RuvA-RuvB allows RuvC to scan DNA until it finds its consensus sequence, where it cleaves and resolves the cruciform DNA. This Vibrio vulnificus (strain CMCP6) protein is Crossover junction endodeoxyribonuclease RuvC.